We begin with the raw amino-acid sequence, 323 residues long: CYFIP-related Rac1 interactor A (323 aa).

The protein belongs to the CYRI family.

Its subcellular location is the membrane. In terms of biological role, may negatively regulate RAC1 signaling and RAC1-driven cytoskeletal remodeling. May regulate chemotaxis, cell migration and epithelial polarization by controlling the polarity, plasticity, duration and extent of protrusions. This chain is CYFIP-related Rac1 interactor A (CYRIA), found in Gallus gallus (Chicken).